Here is a 270-residue protein sequence, read N- to C-terminus: Hairy and enhancer of split-related protein helt (270 aa).

The segment at 1 to 24 (MNARALYKRPPPVSSSQSEASGKR) is disordered. The 56-residue stretch at 59–114 (KTPVSHKVIEKRRRDRINRCLNELGKTVPMALAKQNSGKLEKAEILEMTVQYLRAL) folds into the bHLH domain. The Orange domain occupies 136–171 (FHYGYHECMKNLVHYLTTVERMETKDTKYARILAFL).

This sequence belongs to the HEY family.

It is found in the nucleus. Functionally, transcriptional repressor which binds preferentially to the canonical E box sequence 5'-CACGCG-3'. This is Hairy and enhancer of split-related protein helt (helt) from Danio rerio (Zebrafish).